We begin with the raw amino-acid sequence, 233 residues long: Phosphatidylserine decarboxylase proenzyme (233 aa).

The active-site Schiff-base intermediate with substrate; via pyruvic acid is the serine 190. The residue at position 190 (serine 190) is a Pyruvic acid (Ser); by autocatalysis.

This sequence belongs to the phosphatidylserine decarboxylase family. PSD-A subfamily. Heterodimer of a large membrane-associated beta subunit and a small pyruvoyl-containing alpha subunit. It depends on pyruvate as a cofactor. Is synthesized initially as an inactive proenzyme. Formation of the active enzyme involves a self-maturation process in which the active site pyruvoyl group is generated from an internal serine residue via an autocatalytic post-translational modification. Two non-identical subunits are generated from the proenzyme in this reaction, and the pyruvate is formed at the N-terminus of the alpha chain, which is derived from the carboxyl end of the proenzyme. The post-translation cleavage follows an unusual pathway, termed non-hydrolytic serinolysis, in which the side chain hydroxyl group of the serine supplies its oxygen atom to form the C-terminus of the beta chain, while the remainder of the serine residue undergoes an oxidative deamination to produce ammonia and the pyruvoyl prosthetic group on the alpha chain.

The protein resides in the cell membrane. The catalysed reaction is a 1,2-diacyl-sn-glycero-3-phospho-L-serine + H(+) = a 1,2-diacyl-sn-glycero-3-phosphoethanolamine + CO2. The protein operates within phospholipid metabolism; phosphatidylethanolamine biosynthesis; phosphatidylethanolamine from CDP-diacylglycerol: step 2/2. Catalyzes the formation of phosphatidylethanolamine (PtdEtn) from phosphatidylserine (PtdSer). In Xanthobacter autotrophicus (strain ATCC BAA-1158 / Py2), this protein is Phosphatidylserine decarboxylase proenzyme.